Consider the following 1002-residue polypeptide: E3 ubiquitin-protein ligase BRE1B (1002 aa).

The disordered stretch occupies residues 1 to 32; the sequence is MSGLSNKRAAGDGGSGPPEKKLNREEKTTTTL. Residues 18 to 28 are compositionally biased toward basic and acidic residues; it reads PEKKLNREEKT. Lysine 20 carries the N6-acetyllysine modification. At serine 42 the chain carries Phosphoserine. Residues 55 to 91 adopt a coiled-coil conformation; sequence KNKKLAERLEQRQACEDELRERIEKLEKRQATDDATL. The interval 120-148 is disordered; that stretch reads SSGTEVPGCQEGLTRDVIPRTDPGTSDLR. Coiled coils occupy residues 190 to 378 and 438 to 526; these read KAAV…LRSL and LQKK…ASGS. N6-acetyllysine occurs at positions 356 and 518. Disordered regions lie at residues 520 to 562 and 579 to 652; these read RAQA…PDSK and KKEE…ESEL. Glycyl lysine isopeptide (Lys-Gly) (interchain with G-Cter in SUMO2) cross-links involve residues lysine 579 and lysine 580. A phosphoserine mark is found at serine 585 and serine 586. Basic and acidic residues-rich tracts occupy residues 603 to 620 and 634 to 652; these read RGRE…EREG and RADR…ESEL. Positions 628-947 form a coiled coil; the sequence is AASTLSRADR…EEIKEYKARL (320 aa). The segment at 949 to 988 adopts an RING-type zinc-finger fold; it reads CPCCNTRKKDAVLTKCFHVFCFECVRGRYEARQRKCPKCN.

It belongs to the BRE1 family. Component of the RNF20/40 complex (also known as BRE1 complex) probably composed of 2 copies of RNF20/BRE1A and 2 copies of RNF40/BRE1B. Interacts with UBE2E1/UBCH6. Interacts with RB1 and WAC. May interact with STX1A. As to expression, ubiquitously expressed. Expressed in brain, testis, heart, liver and kidney. Weakly expressed in lung, spleen and skeletal muscle (at protein level).

The protein localises to the nucleus. The enzyme catalyses S-ubiquitinyl-[E2 ubiquitin-conjugating enzyme]-L-cysteine + [acceptor protein]-L-lysine = [E2 ubiquitin-conjugating enzyme]-L-cysteine + N(6)-ubiquitinyl-[acceptor protein]-L-lysine.. It participates in protein modification; protein ubiquitination. Component of the RNF20/40 E3 ubiquitin-protein ligase complex that mediates monoubiquitination of 'Lys-120' of histone H2B (H2BK120ub1). H2BK120ub1 gives a specific tag for epigenetic transcriptional activation and is also prerequisite for histone H3 'Lys-4' and 'Lys-79' methylation (H3K4me and H3K79me, respectively). It thereby plays a central role in histone code and gene regulation. The RNF20/40 complex forms a H2B ubiquitin ligase complex in cooperation with the E2 enzyme UBE2A or UBE2B; reports about the cooperation with UBE2E1/UBCH are contradictory. Required for transcriptional activation of Hox genes. The sequence is that of E3 ubiquitin-protein ligase BRE1B (Rnf40) from Rattus norvegicus (Rat).